An 84-amino-acid polypeptide reads, in one-letter code: Mu-conotoxin-like Cal 12.2a (84 aa).

A signal peptide spans 1 to 19 (MKLTCVLVVLLLVLPFGDL). Positions 20–42 (ITTSNTEDNKRGATPWQNSLKAR) are excised as a propeptide. Disulfide bonds link C45–C57, C52–C65, C59–C70, and C64–C76. P48 is subject to 4-hydroxyproline. W72 is modified (6'-bromotryptophan). The residue at position 77 (P77) is a 4-hydroxyproline. At W81 the chain carries 6'-bromotryptophan.

It belongs to the conotoxin O1 superfamily. Expressed by the venom duct.

The protein resides in the secreted. Mu-conotoxins block voltage-gated sodium channels. This toxin reversibly blocks voltage-gated sodium channel in cephalopods, with no alteration in the voltage dependence of sodium conductance or on the kinetics of inactivation. In Californiconus californicus (California cone), this protein is Mu-conotoxin-like Cal 12.2a.